The chain runs to 545 residues: 2-succinyl-5-enolpyruvyl-6-hydroxy-3-cyclohexene-1-carboxylate synthase (545 aa).

A disordered region spans residues 184–209 (PLVPDPEPHGAPTPAGRPGGRPWTYT). Over residues 195–205 (PTPAGRPGGRP) the composition is skewed to low complexity.

The protein belongs to the TPP enzyme family. MenD subfamily. In terms of assembly, homodimer. Mg(2+) is required as a cofactor. Requires Mn(2+) as cofactor. It depends on thiamine diphosphate as a cofactor.

It carries out the reaction isochorismate + 2-oxoglutarate + H(+) = 5-enolpyruvoyl-6-hydroxy-2-succinyl-cyclohex-3-ene-1-carboxylate + CO2. Its pathway is quinol/quinone metabolism; 1,4-dihydroxy-2-naphthoate biosynthesis; 1,4-dihydroxy-2-naphthoate from chorismate: step 2/7. The protein operates within quinol/quinone metabolism; menaquinone biosynthesis. Its function is as follows. Catalyzes the thiamine diphosphate-dependent decarboxylation of 2-oxoglutarate and the subsequent addition of the resulting succinic semialdehyde-thiamine pyrophosphate anion to isochorismate to yield 2-succinyl-5-enolpyruvyl-6-hydroxy-3-cyclohexene-1-carboxylate (SEPHCHC). The polypeptide is 2-succinyl-5-enolpyruvyl-6-hydroxy-3-cyclohexene-1-carboxylate synthase (Mycobacterium avium (strain 104)).